An 863-amino-acid polypeptide reads, in one-letter code: Leucine--tRNA ligase (863 aa).

Residues 41–51 (PYPSGRIHIGH) carry the 'HIGH' region motif. The 'KMSKS' region motif lies at 627-631 (KMSKS). Residue Lys-630 coordinates ATP.

Belongs to the class-I aminoacyl-tRNA synthetase family.

The protein resides in the cytoplasm. It carries out the reaction tRNA(Leu) + L-leucine + ATP = L-leucyl-tRNA(Leu) + AMP + diphosphate. This Jannaschia sp. (strain CCS1) protein is Leucine--tRNA ligase.